We begin with the raw amino-acid sequence, 37 residues long: Large ribosomal subunit protein bL36 (37 aa).

Belongs to the bacterial ribosomal protein bL36 family.

The polypeptide is Large ribosomal subunit protein bL36 (Mesomycoplasma hyopneumoniae (strain 7448) (Mycoplasma hyopneumoniae)).